Reading from the N-terminus, the 353-residue chain is Variable large protein 12 (353 aa).

A signal peptide spans Met1–Ser18. A lipid anchor (N-palmitoyl cysteine) is attached at Cys19. Cys19 carries S-diacylglycerol cysteine lipidation.

The protein belongs to the variable large protein (Vlp) family. Beta subfamily.

The protein localises to the cell outer membrane. In terms of biological role, the Vlp and Vsp proteins are antigenically distinct proteins, only one vlp or vsp gene is transcriptionally active at any one time. Switching between these genes is a mechanism of host immune response evasion. The sequence is that of Variable large protein 12 from Borrelia hermsii.